The sequence spans 238 residues: Ribonuclease PH (238 aa).

Residues Arg-86 and 124-126 (GTR) each bind phosphate.

Belongs to the RNase PH family. As to quaternary structure, homohexameric ring arranged as a trimer of dimers.

The catalysed reaction is tRNA(n+1) + phosphate = tRNA(n) + a ribonucleoside 5'-diphosphate. Phosphorolytic 3'-5' exoribonuclease that plays an important role in tRNA 3'-end maturation. Removes nucleotide residues following the 3'-CCA terminus of tRNAs; can also add nucleotides to the ends of RNA molecules by using nucleoside diphosphates as substrates, but this may not be physiologically important. Probably plays a role in initiation of 16S rRNA degradation (leading to ribosome degradation) during starvation. The sequence is that of Ribonuclease PH from Escherichia coli O6:K15:H31 (strain 536 / UPEC).